A 464-amino-acid chain; its full sequence is tRNA modification GTPase MnmE (464 aa).

(6S)-5-formyl-5,6,7,8-tetrahydrofolate is bound by residues Arg-28, Glu-90, and Arg-129. One can recognise a TrmE-type G domain in the interval 226–385; sequence GLATAIVGRP…LEEKIAELFF (160 aa). Position 236 (Asn-236) interacts with K(+). GTP is bound by residues 236–241, 255–261, and 280–283; these read NVGKSS, TDIAGTT, and DTAG. Ser-240 lines the Mg(2+) pocket. Thr-255, Ile-257, and Thr-260 together coordinate K(+). Thr-261 contributes to the Mg(2+) binding site. A (6S)-5-formyl-5,6,7,8-tetrahydrofolate-binding site is contributed by Lys-464.

It belongs to the TRAFAC class TrmE-Era-EngA-EngB-Septin-like GTPase superfamily. TrmE GTPase family. In terms of assembly, homodimer. Heterotetramer of two MnmE and two MnmG subunits. It depends on K(+) as a cofactor.

Its subcellular location is the cytoplasm. Exhibits a very high intrinsic GTPase hydrolysis rate. Involved in the addition of a carboxymethylaminomethyl (cmnm) group at the wobble position (U34) of certain tRNAs, forming tRNA-cmnm(5)s(2)U34. The chain is tRNA modification GTPase MnmE from Ligilactobacillus salivarius (strain UCC118) (Lactobacillus salivarius).